A 393-amino-acid chain; its full sequence is Formate-dependent phosphoribosylglycinamide formyltransferase (393 aa).

Residues 22–23 (EL) and E82 each bind N(1)-(5-phospho-beta-D-ribosyl)glycinamide. Residues R114, K155, 160–165 (SSGHGQ), 195–198 (EGFI), and E203 each bind ATP. An ATP-grasp domain is found at 119–308 (RLAAEELGLK…QFALHARAIL (190 aa)). Residues E267 and E279 each coordinate Mg(2+). N(1)-(5-phospho-beta-D-ribosyl)glycinamide is bound by residues D286, K356, and 363–364 (RR).

It belongs to the PurK/PurT family. Homodimer.

It catalyses the reaction N(1)-(5-phospho-beta-D-ribosyl)glycinamide + formate + ATP = N(2)-formyl-N(1)-(5-phospho-beta-D-ribosyl)glycinamide + ADP + phosphate + H(+). It functions in the pathway purine metabolism; IMP biosynthesis via de novo pathway; N(2)-formyl-N(1)-(5-phospho-D-ribosyl)glycinamide from N(1)-(5-phospho-D-ribosyl)glycinamide (formate route): step 1/1. Involved in the de novo purine biosynthesis. Catalyzes the transfer of formate to 5-phospho-ribosyl-glycinamide (GAR), producing 5-phospho-ribosyl-N-formylglycinamide (FGAR). Formate is provided by PurU via hydrolysis of 10-formyl-tetrahydrofolate. This chain is Formate-dependent phosphoribosylglycinamide formyltransferase, found in Actinobacillus pleuropneumoniae serotype 5b (strain L20).